Here is a 500-residue protein sequence, read N- to C-terminus: Polyenoic fatty acid isomerase (500 aa).

Positions 1 to 21 (MSLNRVLHIFLIAYLACTALT) are cleaved as a signal peptide.

As to quaternary structure, homodimer. It depends on an oxidized flavin as a cofactor. In terms of processing, glycosylated.

It carries out the reaction (5Z,8Z,11Z,14Z,17Z)-eicosapentaenoate = (5Z,7E,9E,14Z,17Z)-icosapentaenoate. Its function is as follows. Involved in the biosynthesis of conjugated triene-containing fatty acids. Catalyzes the isomerization of a wide range of substrates containing three or more methylene interrupted olefins into a Z,E,E conjugated triene functionality. May be involved in a stress tolerance mechanism as response to intertidal habitats with direct sunlight, desiccation and high temperature. In vitro substrates include arachidonic acid ((5Z,8Z,11Z,14Z)-eicosatetraenoic acid), EPA ((5Z,8Z, 11Z,14Z,17Z)-eicosapentaenoic acid), DHA ((4Z,7Z,10Z,13Z,16Z,19Z)-docosahexenoic acid), adrenic acid ((7Z,10Z,13Z,16Z)-docosatetraenoic acid), anandamide (arachidonyl-N-ethanolamide) and eicosatrienoic acid ((5Z,8Z,11Z)-eicosatrienoic acid). Gamma-linolenic acid (18:3 6Z,9Z,12Z) and dihomo-gamma-linolenic acid (20:3 8Z,11Z,14Z) are transformed into mixtures of conjugated diene and triene fatty acids, linoleic acid is only transformed to a conjugated diene. In Ptilota filicina (Red alga), this protein is Polyenoic fatty acid isomerase.